Consider the following 108-residue polypeptide: Ig kappa chain V-V region NQ5-89.4 (108 aa).

The framework-1 stretch occupies residues 1 to 23; that stretch reads DIQMTQTTSSLSASLGHRVTITC. The cysteines at positions 23 and 88 are disulfide-linked. The segment at 24 to 34 is complementarity-determining-1; that stretch reads SASQDISNYLN. The interval 35 to 49 is framework-2; the sequence is WYQQKPDGTVKLLIY. Positions 50 to 56 are complementarity-determining-2; it reads YTSRLHS. The tract at residues 57–88 is framework-3; that stretch reads GVPSRFSGSGSATDYSLTITNLQQEDXATYXC. The tract at residues 89–97 is complementarity-determining-3; the sequence is QQGNTLPYT. Positions 98 to 107 are framework-4; sequence FGGGTKLXIK.

Anti-2-phenyl oxazolone (PHOX) Antibody. The sequence is that of Ig kappa chain V-V region NQ5-89.4 from Mus musculus (Mouse).